The primary structure comprises 742 residues: MMTFLCTRSGRRASGVECRIAAERAYFRVRGLPVANMIGWWPRLCPVMSLALLWACSVGAGSDCKSVAIETDSRIAEQTQQRHLQALFDKYGQNGSISLEGLFNLLKGVGLDRIRKVMVHHPGNAHNHTHTHDHTHTHVDKLTAHTHPVTTKKGDMDHSVEKSDPVPKAQPDPASGKKSQSDAHHNLYMKMNQESTTALTTPSYVTRSRRTNRSADYDFTQDHASFSPSQPNVTHSNHTHHDEDTPTHQHDDHDEHEHARASLGCQNASTILQTHGMRKEASLSVKDFSFLCPALLMQIDSKSCIVHEDEDEHSDHSHHHKHHHHHHDHQHLQHPHNHTNGRGQRNTPVYIAWLGGFLSITLISLLALVGVVLIPLMNRVCFNFLLSFLVALAVGTLSGDALLHLIPHSQGHHHHGHSEEHAEEEDSLRPVWTGLTALSGVYIMFLIEHFLTLGKMYKDKNQKVQKRVDLTTEVLESEKLPSLEENDVKIEAAETNGGRALAEEEEVMLGAELYNDIDCENKCHSHFHDTVGQSDEQHHHHHDYHHILHHHHSQNHHPHTHTHRHTHSYSQQHFEQAGVATLAWMVIMGDGLHNFSDGLAIGAAFTEGLSSGLSTSVAVFCHELPHELGDFAVLLKAGMSVRQAMLYNLLSALMGYLGMIIGILIGHYAENVATWIFALTAGLFMYVALVDMVPEMLHNDASEAGFSHYGFFLLQNAGILLGFGIMLIIAVFEDRIQLDLGY.

At 1–353 (MMTFLCTRSG…QRNTPVYIAW (353 aa)) the chain is on the extracellular side. Asn94 and Asn127 each carry an N-linked (GlcNAc...) asparagine glycan. 2 disordered regions span residues 148-182 (PVTT…SQSD) and 191-210 (MNQE…RSRR). The segment covering 152 to 165 (KKGDMDHSVEKSDP) has biased composition (basic and acidic residues). Residues 192–206 (NQESTTALTTPSYVT) show a composition bias toward polar residues. 3 N-linked (GlcNAc...) asparagine glycosylation sites follow: Asn212, Asn232, and Asn237. A disordered region spans residues 220 to 260 (TQDHASFSPSQPNVTHSNHTHHDEDTPTHQHDDHDEHEHAR). Positions 222–236 (DHASFSPSQPNVTHS) are enriched in polar residues. Over residues 239–260 (THHDEDTPTHQHDDHDEHEHAR) the composition is skewed to basic and acidic residues. Residues Asn267 and Asn337 are each glycosylated (N-linked (GlcNAc...) asparagine). The tract at residues 310-342 (EDEHSDHSHHHKHHHHHHDHQHLQHPHNHTNGR) is disordered. Positions 316–339 (HSHHHKHHHHHHDHQHLQHPHNHT) are enriched in basic residues. Residues 354 to 374 (LGGFLSITLISLLALVGVVLI) traverse the membrane as a helical segment. At 375–385 (PLMNRVCFNFL) the chain is on the cytoplasmic side. Residues 386-406 (LSFLVALAVGTLSGDALLHLI) traverse the membrane as a helical segment. The Extracellular segment spans residues 407–430 (PHSQGHHHHGHSEEHAEEEDSLRP). The helical transmembrane segment at 431 to 451 (VWTGLTALSGVYIMFLIEHFL) threads the bilayer. At 452-644 (TLGKMYKDKN…LKAGMSVRQA (193 aa)) the chain is on the cytoplasmic side. The chain crosses the membrane as a helical span at residues 645 to 665 (MLYNLLSALMGYLGMIIGILI). At 666 to 671 (GHYAEN) the chain is on the extracellular side. A helical transmembrane segment spans residues 672 to 692 (VATWIFALTAGLFMYVALVDM). The Cytoplasmic portion of the chain corresponds to 693–710 (VPEMLHNDASEAGFSHYG). The helical transmembrane segment at 711 to 731 (FFLLQNAGILLGFGIMLIIAV) threads the bilayer. Over 732–742 (FEDRIQLDLGY) the chain is Extracellular.

Belongs to the ZIP transporter (TC 2.A.5) family. In terms of processing, cleaved on the N-terminus before locating to the plasma membrane. Post-translationally, N-glycosylated.

It localises to the cell membrane. It catalyses the reaction Zn(2+)(in) = Zn(2+)(out). Functionally, acts as a zinc-influx transporter which plays a role in zinc homeostasis and in the induction of epithelial-to-mesenchymal transition (EMT). In Danio rerio (Zebrafish), this protein is Zinc transporter ZIP6.